A 1016-amino-acid chain; its full sequence is Enhancer of polycomb-like protein 1 (1016 aa).

Disordered regions lie at residues 1-50, 96-119, 450-488, 499-518, and 842-1016; these read MAIH…NDLE, LLGS…DASV, KEED…TIGT, GQVH…VKLP, and ARMR…PNRK. The segment covering 35–50 has biased composition (polar residues); sequence YKQSDLPTLNASNDLE. 2 stretches are compositionally biased toward basic and acidic residues: residues 103 to 116 and 457 to 473; these read DGDK…KKTD and ESSK…DSSR. Residues 475 to 488 are compositionally biased toward polar residues; it reads GSATSMPGSATIGT. The span at 842-883 shows a compositional bias: low complexity; the sequence is ARMRTLQQQQRNNKQQAAGQSSGSSSASLGSNTNSNSSISGQ. A compositionally biased stretch (polar residues) spans 884 to 902; that stretch reads ADQGQTNLTNSGITRQGGA. Residues 904–923 are compositionally biased toward low complexity; that stretch reads VNGSQTSTTNNTRSSVSGGS. Residues 928–956 show a composition bias toward polar residues; the sequence is LPTQSSQRSNTNSPLLASQPQGYSQQQKF. Positions 960–971 are enriched in low complexity; that stretch reads PPTSQSQSQSPT. The span at 976–994 shows a compositional bias: polar residues; it reads QLQTSKMYNKHGSNITPSN.

It belongs to the enhancer of polycomb family. Component of the NuA4 histone acetyltransferase complex.

It is found in the nucleus. In terms of biological role, component of the NuA4 histone acetyltransferase complex which is involved in transcriptional activation of selected genes principally by acetylation of nucleosomal histone H4 and H2A. The NuA4 complex is also involved in DNA repair. Involved in gene silencing by neighboring heterochromatin, blockage of the silencing spreading along the chromosome, and required for cell cycle progression through G2/M. This chain is Enhancer of polycomb-like protein 1 (EPL1), found in Debaryomyces hansenii (strain ATCC 36239 / CBS 767 / BCRC 21394 / JCM 1990 / NBRC 0083 / IGC 2968) (Yeast).